A 149-amino-acid polypeptide reads, in one-letter code: Ribosome maturation factor RimP (149 aa).

This sequence belongs to the RimP family.

It is found in the cytoplasm. Its function is as follows. Required for maturation of 30S ribosomal subunits. In Sulfurimonas denitrificans (strain ATCC 33889 / DSM 1251) (Thiomicrospira denitrificans (strain ATCC 33889 / DSM 1251)), this protein is Ribosome maturation factor RimP.